Consider the following 125-residue polypeptide: Protein ApaG (125 aa).

Residues 1-125 (MINSPRVCVQ…FRLAVPTLIH (125 aa)) form the ApaG domain.

In Klebsiella pneumoniae (strain 342), this protein is Protein ApaG.